The following is a 432-amino-acid chain: Acetylserotonin O-methyltransferase (432 aa).

Residues Tyr146, Trp163, Asp209, 235 to 237, and Arg252 contribute to the S-adenosyl-L-methionine site; that span reads GDF. His255 (proton donor/acceptor) is an active-site residue. Residues Asp256, Asn302, and Gln306 each coordinate substrate. The tract at residues 373–432 is disordered; sequence VPGARSDAAGTGSGTGNTGSGIMLQGETLESEVSAPQAGSDVGGAGNEPRSGTLKQGDWK.

The protein belongs to the class I-like SAM-binding methyltransferase superfamily. Cation-independent O-methyltransferase family. Homodimer. Expressed predominantly in the pineal gland (at protein level). Very low expression, if any, in the retina.

The enzyme catalyses N-acetylserotonin + S-adenosyl-L-methionine = melatonin + S-adenosyl-L-homocysteine + H(+). The protein operates within aromatic compound metabolism; melatonin biosynthesis; melatonin from serotonin: step 1/2. Functionally, catalyzes the transfer of a methyl group onto N-acetylserotonin, producing melatonin (N-acetyl-5-methoxytryptamine). The sequence is that of Acetylserotonin O-methyltransferase (Asmt) from Rattus norvegicus (Rat).